The following is a 325-amino-acid chain: Collagen alpha-1(IX) chain (325 aa).

A compositionally biased stretch (low complexity) spans 1–54 (PGQLGNSGKPGQQGPPGEVGPRGPRGLPGSRGPVGPEGSPGIPGKLGPLGSPGL). 2 disordered regions span residues 1-163 (PGQL…APTD) and 187-325 (RPDT…GPDK). Over residues 198–208 (RPGPPGPPGPP) the composition is skewed to pro residues. A compositionally biased stretch (basic and acidic residues) spans 237 to 249 (PKGDLGEKGERGP). Pro residues predominate over residues 292 to 304 (VPGPPGPPGPPGF).

The protein belongs to the fibril-associated collagens with interrupted helices (FACIT) family. As to quaternary structure, heterotrimer of an alpha 1(IX), an alpha 2(IX) and an alpha 3(IX) chain. In terms of processing, covalently linked to the telopeptides of type II collagen by lysine-derived cross-links. Prolines at the third position of the tripeptide repeating unit (G-X-Y) are hydroxylated in some or all of the chains.

The protein resides in the secreted. Its subcellular location is the extracellular space. It localises to the extracellular matrix. Functionally, structural component of hyaline cartilage and vitreous of the eye. This is Collagen alpha-1(IX) chain (Col9a1) from Rattus norvegicus (Rat).